Here is a 461-residue protein sequence, read N- to C-terminus: MYIDDTIAAIATAPGEAGIGIVRISGEKAIELIDKIFKSKDHKVLSQYKSRRITYGHIIDPKTEKVVDEVLVSYMKGPNTYTREDIVEINCHGGMIPVKNILELVLRVGARMAEPGEFTKRAFLNGRIDLAQAEAIMDLISAKTEKGFDVALSQLEGSLSKKVAKVREKLLDMLAHVEVSIDFAEDDVDEVALDYLLNKSLEVEGDIQKLLDTADTGKIIREGLSTVIVGKPNVGKSSLLNALVRESRAIVTDVPGTTRDIIEEHLNIKGIPLRLIDTAGIRDTEDIVEKIGVERSKELFNLADLIIVMLDASRELTEEDLRIIELIENKRALVIINKTDLQQKLNLTPIQEIIQDKKIIKVSLIEEIGLEEIEDALAEMVYKGGAKAKDSLLVTNVRHKNALERALDSIIDGTKAIEQKLPLDFVEVDIKNSWKALGEITGDTVEEDIIDHIFKNFCIGK.

(6S)-5-formyl-5,6,7,8-tetrahydrofolate contacts are provided by Arg-23, Glu-88, and Arg-127. One can recognise a TrmE-type G domain in the interval 223 to 382 (GLSTVIVGKP…IEDALAEMVY (160 aa)). Asn-233 provides a ligand contact to K(+). GTP is bound by residues 233 to 238 (NVGKSS), 252 to 258 (TDVPGTT), and 277 to 280 (DTAG). A Mg(2+)-binding site is contributed by Ser-237. K(+) contacts are provided by Thr-252, Val-254, and Thr-257. Thr-258 is a binding site for Mg(2+). (6S)-5-formyl-5,6,7,8-tetrahydrofolate is bound at residue Lys-461.

This sequence belongs to the TRAFAC class TrmE-Era-EngA-EngB-Septin-like GTPase superfamily. TrmE GTPase family. Homodimer. Heterotetramer of two MnmE and two MnmG subunits. K(+) serves as cofactor.

It localises to the cytoplasm. In terms of biological role, exhibits a very high intrinsic GTPase hydrolysis rate. Involved in the addition of a carboxymethylaminomethyl (cmnm) group at the wobble position (U34) of certain tRNAs, forming tRNA-cmnm(5)s(2)U34. The chain is tRNA modification GTPase MnmE from Alkaliphilus oremlandii (strain OhILAs) (Clostridium oremlandii (strain OhILAs)).